Consider the following 325-residue polypeptide: Brain mitochondrial carrier protein 1 (325 aa).

6 consecutive transmembrane segments (helical) span residues 38–54 (GLNW…SIVA), 112–128 (LRQA…YQSL), 141–161 (LLIN…IANP), 199–215 (GVVP…GVEL), 240–256 (VSSF…SNPV), and 298–315 (GFWP…IFFI). 3 Solcar repeats span residues 42 to 131 (KPFV…LKRL), 139 to 224 (ETLL…TKKH), and 233 to 323 (DTIL…LKRL).

It belongs to the mitochondrial carrier (TC 2.A.29) family. Homotetramer. In terms of tissue distribution, mainly expressed in brain. Some expression in testis and pituitary.

Its subcellular location is the mitochondrion inner membrane. It carries out the reaction sulfite(in) + sulfate(out) = sulfite(out) + sulfate(in). The enzyme catalyses thiosulfate(in) + sulfate(out) = thiosulfate(out) + sulfate(in). It catalyses the reaction sulfate(out) + phosphate(in) = sulfate(in) + phosphate(out). The catalysed reaction is oxalate(in) + sulfate(out) = oxalate(out) + sulfate(in). It carries out the reaction malonate(in) + sulfate(out) = malonate(out) + sulfate(in). The enzyme catalyses maleate(in) + sulfate(out) = maleate(out) + sulfate(in). It catalyses the reaction (S)-malate(in) + sulfate(out) = (S)-malate(out) + sulfate(in). The catalysed reaction is (3S)-citramalate(in) + sulfate(out) = (3S)-citramalate(out) + sulfate(in). It carries out the reaction (3R)-citramalate(in) + sulfate(out) = (3R)-citramalate(out) + sulfate(in). The enzyme catalyses sulfate(out) + succinate(in) = sulfate(in) + succinate(out). It catalyses the reaction (S,S)-tartrate(in) + sulfate(out) = (S,S)-tartrate(out) + sulfate(in). The catalysed reaction is (2R,3R)-tartrate(in) + sulfate(out) = (2R,3R)-tartrate(out) + sulfate(in). It carries out the reaction D-aspartate(in) + sulfate(out) = D-aspartate(out) + sulfate(in). The enzyme catalyses L-aspartate(in) + sulfate(out) = L-aspartate(out) + sulfate(in). It catalyses the reaction sulfate(in) = sulfate(out). The catalysed reaction is phosphate(in) = phosphate(out). It carries out the reaction (S)-malate(out) = (S)-malate(in). The enzyme catalyses citrate(in) = citrate(out). It catalyses the reaction L-aspartate(out) = L-aspartate(in). The catalysed reaction is L-glutamate(out) = L-glutamate(in). It carries out the reaction H(+)(in) = H(+)(out). The enzyme catalyses chloride(in) = chloride(out). Increased activity at pH lower than 8.0. sulfate/sulfate exchange activity is inhibited strongly by pyridoxal 5'-phosphate, bathophenanthroline and the organic mercurials mersalyl, p-chloromercuribenzoate and HgCl2. Proton conductance is activated by cardiolipin and long-chain free fatty acids and inhibited by purine nucleotides ATP and ADP. Chloride ion transporter activity is inhibited by long-chain free fatty acids. In terms of biological role, transports inorganic anions (sulfate, sulfite, thiosulfate and phosphate) and, to a lesser extent, a variety of dicarboxylates (e.g. malonate, malate and citramalate) and, even more so, aspartate and glutamate and tricarboxylates. May catalyze the export of sulfite and thiosulfate (the hydrogen sulfide degradation products) from the mitochondria, thereby modulating the level of the hydrogen sulfide. Also can mediate a very low unidirectional transport of anions including sulfate, phosphate, (S)-malate, citrate, L-aspartate and L-glutamate. Maintains oxidative balance (through uncoupling activities) and ATP production (by modifying mitochondrial membrane potential). Is able to transport protons across lipid membranes. Also exhibits transmembrane chloride transport activity to a lesser extent. May modify mitochondrial respiratory efficiency and mitochondrial oxidant production. In Homo sapiens (Human), this protein is Brain mitochondrial carrier protein 1.